Reading from the N-terminus, the 173-residue chain is dCTP deaminase, dUMP-forming (173 aa).

DCTP contacts are provided by residues 93-98, Asp111, 119-121, Gln138, and Tyr151; these read RSSTGR and TLE. The Proton donor/acceptor role is filled by Glu121.

Belongs to the dCTP deaminase family. As to quaternary structure, homotrimer.

It carries out the reaction dCTP + 2 H2O = dUMP + NH4(+) + diphosphate. Its pathway is pyrimidine metabolism; dUMP biosynthesis; dUMP from dCTP: step 1/1. Functionally, bifunctional enzyme that catalyzes both the deamination of dCTP to dUTP and the hydrolysis of dUTP to dUMP without releasing the toxic dUTP intermediate. This is dCTP deaminase, dUMP-forming from Clostridium botulinum (strain Alaska E43 / Type E3).